The sequence spans 274 residues: tRNA-cytidine(32) 2-sulfurtransferase (274 aa).

The PP-loop motif signature appears at 40 to 45 (SGGKDS). [4Fe-4S] cluster contacts are provided by Cys115, Cys118, and Cys206.

Belongs to the TtcA family. In terms of assembly, homodimer. Requires Mg(2+) as cofactor. It depends on [4Fe-4S] cluster as a cofactor.

It is found in the cytoplasm. It carries out the reaction cytidine(32) in tRNA + S-sulfanyl-L-cysteinyl-[cysteine desulfurase] + AH2 + ATP = 2-thiocytidine(32) in tRNA + L-cysteinyl-[cysteine desulfurase] + A + AMP + diphosphate + H(+). It functions in the pathway tRNA modification. Functionally, catalyzes the ATP-dependent 2-thiolation of cytidine in position 32 of tRNA, to form 2-thiocytidine (s(2)C32). The sulfur atoms are provided by the cysteine/cysteine desulfurase (IscS) system. The sequence is that of tRNA-cytidine(32) 2-sulfurtransferase from Pseudomonas syringae pv. tomato (strain ATCC BAA-871 / DC3000).